Consider the following 878-residue polypeptide: Phosphoenolpyruvate carboxylase (878 aa).

Catalysis depends on residues H137 and K545.

The protein belongs to the PEPCase type 1 family. Requires Mg(2+) as cofactor.

The catalysed reaction is oxaloacetate + phosphate = phosphoenolpyruvate + hydrogencarbonate. Forms oxaloacetate, a four-carbon dicarboxylic acid source for the tricarboxylic acid cycle. In Proteus mirabilis (strain HI4320), this protein is Phosphoenolpyruvate carboxylase.